Consider the following 245-residue polypeptide: tRNA1(Val) (adenine(37)-N6)-methyltransferase (245 aa).

The protein belongs to the methyltransferase superfamily. tRNA (adenine-N(6)-)-methyltransferase family.

Its subcellular location is the cytoplasm. The catalysed reaction is adenosine(37) in tRNA1(Val) + S-adenosyl-L-methionine = N(6)-methyladenosine(37) in tRNA1(Val) + S-adenosyl-L-homocysteine + H(+). Specifically methylates the adenine in position 37 of tRNA(1)(Val) (anticodon cmo5UAC). The chain is tRNA1(Val) (adenine(37)-N6)-methyltransferase from Salmonella enteritidis PT4 (strain P125109).